The sequence spans 182 residues: MAEFPSKVSTRTSSPAQGVGASVSALRPDLGFVRSALGVLALLQLALGLLVWALIADTPYHLYPAYGWVMFVAVFLWLVTIVFFIIYLFQLHMKLYMVPWPLVLLIFFVAATVLYITAFIACAAAVDLTSLRGSRPYNQRSAASFFACLVMIAYGVSAFFSFQAWRGVGSNAATSQMAGGYS.

Residues 1–35 (MAEFPSKVSTRTSSPAQGVGASVSALRPDLGFVRS) are Cytoplasmic-facing. S9 is subject to Phosphoserine. Residues 32-166 (FVRSALGVLA…SAFFSFQAWR (135 aa)) enclose the MARVEL domain. The helical transmembrane segment at 36–56 (ALGVLALLQLALGLLVWALIA) threads the bilayer. Over 57–68 (DTPYHLYPAYGW) the chain is Extracellular. Residues 69-89 (VMFVAVFLWLVTIVFFIIYLF) form a helical membrane-spanning segment. The Cytoplasmic portion of the chain corresponds to 90 to 99 (QLHMKLYMVP). Residues 100 to 120 (WPLVLLIFFVAATVLYITAFI) traverse the membrane as a helical segment. Topologically, residues 121-141 (ACAAAVDLTSLRGSRPYNQRS) are extracellular. Residues 142–162 (AASFFACLVMIAYGVSAFFSF) form a helical membrane-spanning segment. Topologically, residues 163-182 (QAWRGVGSNAATSQMAGGYS) are cytoplasmic.

This sequence belongs to the MAL family. Forms oligomers. Phosphorylated.

It localises to the membrane. Its subcellular location is the cell membrane. It is found in the myelin membrane. The protein resides in the apical cell membrane. In terms of biological role, main component of the myelin sheath that plays an important role in myelin membrane biogenesis and myelination. Plays an essential function in apical endocytosis. Regulates epithelial development through the regulation of apical endocytosis. Part of the intracellular machinery that mediates basolateral-to-apical transport of ICAM-1, an essential adhesion receptor in epithelial cells, from the subapical compartment in hepatic epithelial cells. This Mus musculus (Mouse) protein is Plasmolipin (Pllp).